The sequence spans 420 residues: Threonine aspartase 1 (420 aa).

A disordered region spans residues 1 to 23; that stretch reads MTMEKGMSSGEGLPSRSSQVSAG. T234 functions as the Nucleophile in the catalytic mechanism.

The protein belongs to the Ntn-hydrolase family. Intramolecular proteolysis generates 2 subunits, alpha and beta, which reassemble through a non-covalent association to form the fully active enzyme.

Functionally, protease responsible for KMT2A/MLL1 processing and activation. It also activates KMT2D/MLL2. Through substrate activation, it controls the expression of HOXA genes, and the expression of key cell cycle regulators including CCNA1, CCNB1, CCNE1 and CDKN2A. This is Threonine aspartase 1 (TASP1) from Homo sapiens (Human).